A 471-amino-acid chain; its full sequence is Ubiquitin-conjugating enzyme E2 variant 3 (471 aa).

A UEV domain is found at 2 to 145; sequence DVNSEPVKKV…EEEPPLGTKS (144 aa). 183 to 211 lines the NAD(+) pocket; it reads GDLGIAAVLSIMAKSCVDKLVLIDIPENS.

In the N-terminal section; belongs to the ubiquitin-conjugating enzyme family. UEV subfamily. The protein in the C-terminal section; belongs to the LDH/MDH superfamily. As to quaternary structure, homodimer.

Possible negative regulator of polyubiquitination. This Danio rerio (Zebrafish) protein is Ubiquitin-conjugating enzyme E2 variant 3 (uevld).